The chain runs to 83 residues: Glutaredoxin 3 (83 aa).

In terms of domain architecture, Glutaredoxin spans 2–83 (ANVEIYTKET…ARGGLDPLLK (82 aa)). A disulfide bond links C12 and C15.

It belongs to the glutaredoxin family. Monomer.

Functionally, the disulfide bond functions as an electron carrier in the glutathione-dependent synthesis of deoxyribonucleotides by the enzyme ribonucleotide reductase. In addition, it is also involved in reducing some disulfides in a coupled system with glutathione reductase. This Escherichia coli O157:H7 protein is Glutaredoxin 3 (grxC).